A 261-amino-acid chain; its full sequence is Synaptophysin-like protein 1 (261 aa).

The Cytoplasmic segment spans residues 1 to 33 (MASKANMVRQRFSRLSQRMSAFQINLNPLKEPL). One can recognise an MARVEL domain in the interval 28-239 (PLKEPLGFIK…NAWFVYKETS (212 aa)). Residues 34-54 (GFIKILEWFASIFAFATCGGF) form a helical membrane-spanning segment. Over 55 to 117 (KGKTEIQVNC…LIGDYSSSAQ (63 aa)) the chain is Vesicular. N-linked (GlcNAc...) asparagine glycans are attached at residues Asn-72 and Asn-95. The helical transmembrane segment at 118 to 138 (FYVTFAVFVFLYCIAALLLYV) threads the bilayer. Over 139-151 (GYTNLYRDSRKLP) the chain is Cytoplasmic. A helical transmembrane segment spans residues 152 to 172 (MIDFIVTLVATFLWLVSSSAW). At 173–214 (AKALTDIKVATGHRIVEELEICNPESGVSCYFVSVTSMGSLN) the chain is on the vesicular side. Residue Asn-214 is glycosylated (N-linked (GlcNAc...) asparagine). Residues 215 to 235 (VSVIFGFLNMILWGGNAWFVY) form a helical membrane-spanning segment. The Cytoplasmic portion of the chain corresponds to 236 to 261 (KETSLHSPSNTSASHSQGGGPPTSGM). Over residues 241–251 (HSPSNTSASHS) the composition is skewed to polar residues. Residues 241-261 (HSPSNTSASHSQGGGPPTSGM) are disordered. Residues 252–261 (QGGGPPTSGM) show a composition bias toward gly residues.

This sequence belongs to the synaptophysin/synaptobrevin family. In terms of tissue distribution, ubiquitously expressed.

The protein resides in the cytoplasmic vesicle membrane. It is found in the melanosome. This Mus musculus (Mouse) protein is Synaptophysin-like protein 1 (Sypl1).